Reading from the N-terminus, the 110-residue chain is UPF0122 protein SH1678 (110 aa).

It belongs to the UPF0122 family.

In terms of biological role, might take part in the signal recognition particle (SRP) pathway. This is inferred from the conservation of its genetic proximity to ftsY/ffh. May be a regulatory protein. This is UPF0122 protein SH1678 from Staphylococcus haemolyticus (strain JCSC1435).